The following is a 133-amino-acid chain: Profilin-3 (133 aa).

Cys13 and Cys117 form a disulfide bridge. Residues 83–99 (AVIRGKKGSGGITIKKT) carry the Involved in PIP2 interaction motif. Thr113 carries the post-translational modification Phosphothreonine.

This sequence belongs to the profilin family. As to quaternary structure, occurs in many kinds of cells as a complex with monomeric actin in a 1:1 ratio. Post-translationally, phosphorylated by MAP kinases.

Its subcellular location is the cytoplasm. The protein resides in the cytoskeleton. In terms of biological role, binds to actin and affects the structure of the cytoskeleton. At high concentrations, profilin prevents the polymerization of actin, whereas it enhances it at low concentrations. The polypeptide is Profilin-3 (Corylus avellana (European hazel)).